We begin with the raw amino-acid sequence, 338 residues long: tRNA N6-adenosine threonylcarbamoyltransferase (338 aa).

Histidine 111 and histidine 115 together coordinate Fe cation. Residues 134–138 (LVSGG), aspartate 167, glycine 180, and asparagine 272 each bind substrate. Aspartate 300 contributes to the Fe cation binding site.

It belongs to the KAE1 / TsaD family. Fe(2+) serves as cofactor.

It is found in the cytoplasm. The catalysed reaction is L-threonylcarbamoyladenylate + adenosine(37) in tRNA = N(6)-L-threonylcarbamoyladenosine(37) in tRNA + AMP + H(+). Its function is as follows. Required for the formation of a threonylcarbamoyl group on adenosine at position 37 (t(6)A37) in tRNAs that read codons beginning with adenine. Is involved in the transfer of the threonylcarbamoyl moiety of threonylcarbamoyl-AMP (TC-AMP) to the N6 group of A37, together with TsaE and TsaB. TsaD likely plays a direct catalytic role in this reaction. The sequence is that of tRNA N6-adenosine threonylcarbamoyltransferase from Aliivibrio salmonicida (strain LFI1238) (Vibrio salmonicida (strain LFI1238)).